We begin with the raw amino-acid sequence, 249 residues long: Triosephosphate isomerase (249 aa).

9 to 11 (NWK) serves as a coordination point for substrate. The active-site Electrophile is the His95. The Proton acceptor role is filled by Glu167. Residues Gly173, Ser213, and 234–235 (GG) each bind substrate.

It belongs to the triosephosphate isomerase family. As to quaternary structure, homodimer.

Its subcellular location is the cytoplasm. It carries out the reaction D-glyceraldehyde 3-phosphate = dihydroxyacetone phosphate. Its pathway is carbohydrate biosynthesis; gluconeogenesis. It participates in carbohydrate degradation; glycolysis; D-glyceraldehyde 3-phosphate from glycerone phosphate: step 1/1. Involved in the gluconeogenesis. Catalyzes stereospecifically the conversion of dihydroxyacetone phosphate (DHAP) to D-glyceraldehyde-3-phosphate (G3P). The protein is Triosephosphate isomerase of Dictyoglomus thermophilum (strain ATCC 35947 / DSM 3960 / H-6-12).